A 292-amino-acid polypeptide reads, in one-letter code: Elongation factor Ts (292 aa).

Residues 80–83 are involved in Mg(2+) ion dislocation from EF-Tu; the sequence is TDFV.

Belongs to the EF-Ts family.

It localises to the cytoplasm. Its function is as follows. Associates with the EF-Tu.GDP complex and induces the exchange of GDP to GTP. It remains bound to the aminoacyl-tRNA.EF-Tu.GTP complex up to the GTP hydrolysis stage on the ribosome. This chain is Elongation factor Ts, found in Tolumonas auensis (strain DSM 9187 / NBRC 110442 / TA 4).